The primary structure comprises 308 residues: Nodulation protein D 1 (308 aa).

Positions 6–63 (LDLNLLVALDALMTERKLTAAARRINLSQPAMSAAIARLRTYFGDELFSMQGRELIPT) constitute an HTH lysR-type domain. Positions 23-42 (LTAAARRINLSQPAMSAAIA) form a DNA-binding region, H-T-H motif.

The protein belongs to the LysR transcriptional regulatory family.

Its function is as follows. NodD regulates the expression of the nodABCFE genes which encode other nodulation proteins. NodD is also a negative regulator of its own expression. Binds flavonoids as inducers. The polypeptide is Nodulation protein D 1 (nodD1) (Rhizobium meliloti (strain 1021) (Ensifer meliloti)).